The following is a 457-amino-acid chain: ATP-dependent RNA helicase DbpA (457 aa).

Positions 3-31 (AFSTLNVLPPAQLTNLNELGYLTMTPVQA) match the Q motif motif. Positions 34–205 (LPAILAGKDV…GRVQRDPLAI (172 aa)) constitute a Helicase ATP-binding domain. ATP is bound at residue 47–54 (AKTGSGKT). The DEAD box motif lies at 153-156 (DEAD). Residues 230–376 (PLLQRLLSLH…QTPPANSSIA (147 aa)) enclose the Helicase C-terminal domain. Residues 383–457 (ATLCIDGGKK…GKTCRVRLLK (75 aa)) form an involved in 23S rRNA binding region.

The protein belongs to the DEAD box helicase family. DbpA subfamily. As to quaternary structure, monomer.

The protein localises to the cytoplasm. The catalysed reaction is ATP + H2O = ADP + phosphate + H(+). Requires hairpin 92 of 23S rRNA for optimal activity. ATPase activity is stimulated by interaction of the N-terminal domain with RNA. Its function is as follows. DEAD-box RNA helicase involved in the assembly of the 50S ribosomal subunit. Has an RNA-dependent ATPase activity, which is specific for 23S rRNA, and a 3' to 5' RNA helicase activity that uses the energy of ATP hydrolysis to destabilize and unwind short rRNA duplexes. Requires a single-stranded RNA loading site on the 3' side of the substrate helix. The sequence is that of ATP-dependent RNA helicase DbpA from Escherichia coli (strain K12).